A 525-amino-acid polypeptide reads, in one-letter code: Ent-kaurene oxidase (525 aa).

Residues 31–51 form a helical membrane-spanning segment; sequence VHWLIYVAFGAWLCSYVIHVL. Cys466 contacts heme.

The protein belongs to the cytochrome P450 family. The cofactor is heme.

It localises to the membrane. The catalysed reaction is ent-kaur-16-ene + 3 reduced [NADPH--hemoprotein reductase] + 3 O2 = ent-kaur-16-en-19-oate + 3 oxidized [NADPH--hemoprotein reductase] + 4 H2O + 4 H(+). The protein operates within plant hormone biosynthesis; gibberellin biosynthesis. Its function is as follows. Catalyzes three successive oxidations of the 4-methyl group of ent-kaurene giving kaurenoic acid, a key step in gibberellin (GA) biosynthesis. This chain is Ent-kaurene oxidase (CYP503A1), found in Fusarium fujikuroi (Bakanae and foot rot disease fungus).